The chain runs to 445 residues: Phosphoglucosamine mutase (445 aa).

Ser-99 serves as the catalytic Phosphoserine intermediate. Residues Ser-99, Asp-242, Asp-244, and Asp-246 each contribute to the Mg(2+) site. A Phosphoserine modification is found at Ser-99.

The protein belongs to the phosphohexose mutase family. The cofactor is Mg(2+). Activated by phosphorylation.

The catalysed reaction is alpha-D-glucosamine 1-phosphate = D-glucosamine 6-phosphate. Functionally, catalyzes the conversion of glucosamine-6-phosphate to glucosamine-1-phosphate. This Campylobacter jejuni (strain RM1221) protein is Phosphoglucosamine mutase.